The primary structure comprises 238 residues: Cysteine-rich venom protein (238 aa).

Positions 1–19 (MIAFIVLLSLAAVLQQSSG) are cleaved as a signal peptide. The SCP domain occupies 38–164 (VDKHNALRRS…STKYLYVCQY (127 aa)). 8 cysteine pairs are disulfide-bonded: cysteine 75–cysteine 153, cysteine 92–cysteine 165, cysteine 148–cysteine 162, cysteine 184–cysteine 191, cysteine 187–cysteine 196, cysteine 200–cysteine 233, cysteine 209–cysteine 227, and cysteine 218–cysteine 231. The region spanning 200-233 (CKYEDAFTNCKALAKKTKCKTEWIKSKCPATCFC) is the ShKT domain.

The protein belongs to the CRISP family. Expressed by the venom gland.

The protein localises to the secreted. Its function is as follows. Blocks contraction of smooth muscle elicited by high potassium-induced depolarization, but does not block caffeine-stimulated contraction. May target voltage-gated calcium channels on smooth muscle. This Austrelaps superbus (Lowland copperhead snake) protein is Cysteine-rich venom protein.